We begin with the raw amino-acid sequence, 331 residues long: MEVERVQAIASLGQKLDTIPSEFIRSEHEQPGKTTFDGPIPEIPVIDLGDKDGIVGAVAEAAREWGLFQIINHGIPVEVIKELQRVGKEFFELPQEEKEVYAMDMVTMEGYGTKLQKETEGKKAWVDHLFHNIWPESRINYNFWPQNPPDYRKANKEYAKHLLEVMGEILTSLSLGLGLEGHVFKEALGGDAIELLLKINYYPTCPRPDLALGVPAHTDMSAITLLVPNEVPGLQVFKDDHWFDAKYIPNAIIVHIGDQIEILSNGKYKSVLHRTTVNKEKVRMSWPVFCSPPGEWMVGTLPQLVSEDTPAKYKTKKYKDYQYCKLNKLPQ.

The region spanning 191–292 (DAIELLLKIN…RMSWPVFCSP (102 aa)) is the Fe2OG dioxygenase domain. Residues His-217, Asp-219, and His-273 each coordinate Fe cation. Arg-283 contributes to the 2-oxoglutarate binding site.

Belongs to the iron/ascorbate-dependent oxidoreductase family. The cofactor is L-ascorbate. Fe(2+) is required as a cofactor. As to expression, expressed in young cromes.

It carries out the reaction a (2R,3R)-dihydroflavonol + 2-oxoglutarate + O2 = a flavonol + succinate + CO2 + H2O. The catalysed reaction is (2R,3R)-dihydrokaempferol + 2-oxoglutarate + O2 = kaempferol + succinate + CO2 + H2O + H(+). The enzyme catalyses (2R,3R)-dihydroquercetin + 2-oxoglutarate + O2 = quercetin + succinate + CO2 + H2O + H(+). It catalyses the reaction (2R,3R)-dihydromyricetin + 2-oxoglutarate + O2 = myricetin + succinate + CO2 + H2O + H(+). Its pathway is flavonoid metabolism. Its function is as follows. Catalyzes the formation of flavonols from dihydroflavonols. Can act on dihydrokaempferol to produce kaempferol, on dihydroquercetin to produce quercitin and on dihydromyricetin to produce myricetin. The polypeptide is Flavonol synthase 1 (Crocosmia x crocosmiiflora (Montbretia)).